A 283-amino-acid polypeptide reads, in one-letter code: Bifunctional protein FolD (283 aa).

NADP(+) contacts are provided by residues 166–168, Ser-191, and Ile-232; that span reads GRS.

It belongs to the tetrahydrofolate dehydrogenase/cyclohydrolase family. Homodimer.

The catalysed reaction is (6R)-5,10-methylene-5,6,7,8-tetrahydrofolate + NADP(+) = (6R)-5,10-methenyltetrahydrofolate + NADPH. It carries out the reaction (6R)-5,10-methenyltetrahydrofolate + H2O = (6R)-10-formyltetrahydrofolate + H(+). The protein operates within one-carbon metabolism; tetrahydrofolate interconversion. In terms of biological role, catalyzes the oxidation of 5,10-methylenetetrahydrofolate to 5,10-methenyltetrahydrofolate and then the hydrolysis of 5,10-methenyltetrahydrofolate to 10-formyltetrahydrofolate. This chain is Bifunctional protein FolD, found in Rickettsia bellii (strain RML369-C).